A 398-amino-acid chain; its full sequence is S-adenosylmethionine synthase (398 aa).

ATP is bound at residue H16. D18 serves as a coordination point for Mg(2+). Residue E51 coordinates K(+). The L-methionine site is built by E64 and Q108. A flexible loop region spans residues 108–118 (QSADIAQGVDA). ATP-binding positions include 176-178 (DSK), 242-243 (KF), D251, 257-258 (RK), A274, and K278. D251 is an L-methionine binding site. K282 serves as a coordination point for L-methionine.

The protein belongs to the AdoMet synthase family. Homotetramer; dimer of dimers. Mg(2+) serves as cofactor. The cofactor is K(+).

The protein localises to the cytoplasm. The enzyme catalyses L-methionine + ATP + H2O = S-adenosyl-L-methionine + phosphate + diphosphate. It functions in the pathway amino-acid biosynthesis; S-adenosyl-L-methionine biosynthesis; S-adenosyl-L-methionine from L-methionine: step 1/1. In terms of biological role, catalyzes the formation of S-adenosylmethionine (AdoMet) from methionine and ATP. The overall synthetic reaction is composed of two sequential steps, AdoMet formation and the subsequent tripolyphosphate hydrolysis which occurs prior to release of AdoMet from the enzyme. This chain is S-adenosylmethionine synthase, found in Nitrobacter hamburgensis (strain DSM 10229 / NCIMB 13809 / X14).